The chain runs to 981 residues: Anoctamin-3 (981 aa).

The segment covering M1 to S22 has biased composition (polar residues). Positions M1 to S33 are disordered. Residues M1 to T403 are Cytoplasmic-facing. The helical transmembrane segment at G404 to M424 threads the bilayer. N-linked (GlcNAc...) asparagine glycans are attached at residues N425, N448, and N455. The Extracellular segment spans residues N425–N469. Residues G470–W490 form a helical membrane-spanning segment. Over K491–S550 the chain is Cytoplasmic. A helical membrane pass occupies residues V551–Y571. Residues R572–Q592 are Extracellular-facing. The chain crosses the membrane as a helical span at residues F593–A613. Over Y614–K640 the chain is Cytoplasmic. A helical membrane pass occupies residues M641–G661. Residues R662–Q761 are Extracellular-facing. A helical membrane pass occupies residues F762–N782. Residues N783–G810 are Cytoplasmic-facing. Residues I811–I831 traverse the membrane as a helical segment. The Extracellular portion of the chain corresponds to A832–L914. N866 carries N-linked (GlcNAc...) asparagine glycosylation. A helical transmembrane segment spans residues A915 to I935. At P936–P981 the chain is on the cytoplasmic side.

This sequence belongs to the anoctamin family. As to quaternary structure, interacts with KCNT1/Slack. As to expression, highly expressed in the forebrain striatum.

It is found in the cell membrane. The enzyme catalyses a 1,2-diacyl-sn-glycero-3-phosphocholine(in) = a 1,2-diacyl-sn-glycero-3-phosphocholine(out). The catalysed reaction is a beta-D-galactosyl-(1&lt;-&gt;1')-N-acylsphing-4-enine(out) = a beta-D-galactosyl-(1&lt;-&gt;1')-N-acylsphing-4-enine(in). Has calcium-dependent phospholipid scramblase activity; scrambles phosphatidylcholine and galactosylceramide. Seems to act as potassium channel regulator and may inhibit pain signaling; can facilitate KCNT1/Slack channel activity by promoting its full single-channel conductance at very low sodium concentrations and by increasing its sodium sensitivity. Does not exhibit calcium-activated chloride channel (CaCC) activity. The chain is Anoctamin-3 (ANO3) from Homo sapiens (Human).